We begin with the raw amino-acid sequence, 383 residues long: Paralemmin-1 (383 aa).

Met1 bears the N-acetylmethionine mark. Positions 5–102 (ATDTASQQER…KEIDVLEFGE (98 aa)) form a coiled coil. 3 disordered regions span residues 51-163 (RERW…GSTM), 242-295 (TLSE…GQEP), and 334-375 (ATPR…MKKP). The segment covering 69-96 (DMRKQMQEDEQKARGLEESITRLEKEID) has biased composition (basic and acidic residues). 2 stretches are compositionally biased toward polar residues: residues 109–124 (KENS…QSAS) and 133–143 (ETLVNAQQTPL). Ser116, Ser122, and Ser124 each carry phosphoserine. Phosphothreonine occurs at positions 141, 145, and 153. Phosphoserine occurs at positions 157 and 161. Position 242 is a phosphothreonine (Thr242). Ser244 bears the Phosphoserine mark. Basic and acidic residues predominate over residues 257-273 (GLAEDVTRTTPSRREIT). The span at 285–295 (GPPGIQPGQEP) shows a compositional bias: low complexity. The residue at position 345 (Ser345) is a Phosphoserine. Residues 357-367 (QTGPTTTPSDT) are compositionally biased toward polar residues. Phosphothreonine occurs at positions 361, 362, and 363. Ser365 carries the post-translational modification Phosphoserine. Thr367 bears the Phosphothreonine mark. 2 S-palmitoyl cysteine lipidation sites follow: Cys377 and Cys379. Cys380 bears the Cysteine methyl ester mark. Residue Cys380 is the site of S-farnesyl cysteine attachment. Positions 381–383 (SVM) are cleaved as a propeptide — removed in mature form.

The protein belongs to the paralemmin family. As to quaternary structure, interacts with dopamine receptor DRD3. As to expression, expression is highest in brain, intermediate in adrenal gland and kidney, and much lower or undetectable in other tissues. Isoform 1 is the predominant isoform in most tissues except brain and kidney where isoform 2 predominates.

It is found in the cell membrane. Its subcellular location is the cell projection. It localises to the filopodium membrane. The protein localises to the axon. The protein resides in the dendrite. It is found in the dendritic spine. Its subcellular location is the basolateral cell membrane. It localises to the apicolateral cell membrane. Its function is as follows. Involved in plasma membrane dynamics and cell process formation. Isoform 1 and isoform 2 are necessary for axonal and dendritic filopodia induction, for dendritic spine maturation and synapse formation in a palmitoylation-dependent manner. The polypeptide is Paralemmin-1 (Palm) (Mus musculus (Mouse)).